A 141-amino-acid polypeptide reads, in one-letter code: ATP synthase epsilon chain (141 aa).

It belongs to the ATPase epsilon chain family. As to quaternary structure, F-type ATPases have 2 components, CF(1) - the catalytic core - and CF(0) - the membrane proton channel. CF(1) has five subunits: alpha(3), beta(3), gamma(1), delta(1), epsilon(1). CF(0) has three main subunits: a, b and c.

It is found in the cell inner membrane. Produces ATP from ADP in the presence of a proton gradient across the membrane. The chain is ATP synthase epsilon chain from Gluconacetobacter diazotrophicus (strain ATCC 49037 / DSM 5601 / CCUG 37298 / CIP 103539 / LMG 7603 / PAl5).